The sequence spans 61 residues: Conotoxin Bt5.1 (61 aa).

Residues Met1–Ala22 form the signal peptide. Positions Arg23–Asn48 are excised as a propeptide.

This sequence belongs to the conotoxin T superfamily. Contains 2 disulfide bonds that can be either 'C1-C3, C2-C4' or 'C1-C4, C2-C3', since these disulfide connectivities have been observed for conotoxins with cysteine framework V (for examples, see AC P0DQQ7 and AC P81755). As to expression, expressed by the venom duct.

Its subcellular location is the secreted. This chain is Conotoxin Bt5.1, found in Conus betulinus (Beech cone).